We begin with the raw amino-acid sequence, 525 residues long: Phosphoenolpyruvate carboxykinase (ATP) (525 aa).

Substrate contacts are provided by Arg54, Tyr190, and Lys196. ATP-binding positions include Lys196, His215, and 231 to 239 (GLSGTGKTT). Mn(2+)-binding residues include Lys196 and His215. Residue Asp252 coordinates Mn(2+). Glu280, Arg316, and Thr441 together coordinate ATP. Arg316 is a binding site for substrate.

The protein belongs to the phosphoenolpyruvate carboxykinase (ATP) family. Mn(2+) serves as cofactor.

The protein localises to the cytoplasm. The catalysed reaction is oxaloacetate + ATP = phosphoenolpyruvate + ADP + CO2. Its pathway is carbohydrate biosynthesis; gluconeogenesis. Functionally, involved in the gluconeogenesis. Catalyzes the conversion of oxaloacetate (OAA) to phosphoenolpyruvate (PEP) through direct phosphoryl transfer between the nucleoside triphosphate and OAA. The polypeptide is Phosphoenolpyruvate carboxykinase (ATP) (Nitratiruptor sp. (strain SB155-2)).